The sequence spans 315 residues: Fructose-1,6-bisphosphatase class 1 (315 aa).

Positions 90, 111, 113, and 114 each coordinate Mg(2+). Residues 114-117 (DGSS), Tyr222, and Lys253 contribute to the substrate site. Glu259 contributes to the Mg(2+) binding site.

The protein belongs to the FBPase class 1 family. As to quaternary structure, homotetramer. Mg(2+) serves as cofactor.

It localises to the cytoplasm. The enzyme catalyses beta-D-fructose 1,6-bisphosphate + H2O = beta-D-fructose 6-phosphate + phosphate. The protein operates within carbohydrate biosynthesis; gluconeogenesis. The polypeptide is Fructose-1,6-bisphosphatase class 1 (Trichlorobacter lovleyi (strain ATCC BAA-1151 / DSM 17278 / SZ) (Geobacter lovleyi)).